The primary structure comprises 488 residues: MSFNHKTIEELHDLLVAKEISATELTQKTLEDIKSREEAVGSFITVSEEAALKQAAAIDAKGIDADNLMSGIPLAVKDNISTKGILTTAASKMLYNYEPIFDATSVANAYAKDMIVIGKTNMDEFAMGGSTETSYFKKTKNAWDHTKVPGGSSGGSATAVASGQVRLSLGSDTGGSIRQPAAFNGVVGLKPTYGTVSRYGLIAFGSSLDQIGPFAPTVKENAQLLNVIASSDVKDATSAPVRIADYTSKIGRDIKGMKIAFPKEYLGEGIDPKIKETVLAAAKQFEALGATVEEVSLPHSKYGVAVYYIIASSEASSNLQRFDGIRYGFRADDAKNLDEIYVNTRSQGFGDEVKRRIMLGTFSLSSGYYDAYFKKAGQVRTLIIEDFDKVFADYDLILGPTTPAVAFGLDTLNHDPVAMYLADLLTIPVNLAGLPGISIPAGFVDGLPVGLQLIGPKYAEETIYQAAAAFEAVTDYHKQQPIIFGGDK.

Catalysis depends on charge relay system residues K77 and S152. S176 serves as the catalytic Acyl-ester intermediate.

Belongs to the amidase family. GatA subfamily. Heterotrimer of A, B and C subunits.

The catalysed reaction is L-glutamyl-tRNA(Gln) + L-glutamine + ATP + H2O = L-glutaminyl-tRNA(Gln) + L-glutamate + ADP + phosphate + H(+). Allows the formation of correctly charged Gln-tRNA(Gln) through the transamidation of misacylated Glu-tRNA(Gln) in organisms which lack glutaminyl-tRNA synthetase. The reaction takes place in the presence of glutamine and ATP through an activated gamma-phospho-Glu-tRNA(Gln). The sequence is that of Glutamyl-tRNA(Gln) amidotransferase subunit A from Streptococcus pyogenes serotype M12 (strain MGAS2096).